The chain runs to 461 residues: Na(+)/H(+) antiporter NhaA (461 aa).

The interval 1–23 (MILSTQRLGRFMSPAPTPAPDAK) is disordered. 12 helical membrane passes run 48–68 (VGGA…NSPV), 89–109 (LSLG…LVGL), 127–147 (IVPV…YAAV), 157–177 (GWAI…AIIG), 186–206 (IFLL…IAFF), 211–231 (IQAA…FLAQ), 236–256 (FFGA…IVTW), 257–277 (ALVH…GFAV), 305–325 (ISAG…AVGG), 339–359 (IGII…TTWI), 374–394 (WIDV…SLLV), and 408–428 (HAKV…TVVL).

Belongs to the NhaA Na(+)/H(+) (TC 2.A.33) antiporter family.

It is found in the cell membrane. It catalyses the reaction Na(+)(in) + 2 H(+)(out) = Na(+)(out) + 2 H(+)(in). In terms of biological role, na(+)/H(+) antiporter that extrudes sodium in exchange for external protons. In Arthrobacter sp. (strain FB24), this protein is Na(+)/H(+) antiporter NhaA.